The following is a 2758-amino-acid chain: Highly reducing polyketide synthase NEC1 (2758 aa).

The region spanning 153-492 (EASSPIIGLD…GSNAHVVMDD (340 aa)) is the Ketosynthase family 3 (KS3) domain. The disordered stretch occupies residues 512-576 (PRLPGSSSSR…NTDTLQTTDT (65 aa)). Residues 566–576 (TNTDTLQTTDT) show a composition bias toward low complexity. The interval 700–1044 (VFTGQGAQWP…GYATVLKRGD (345 aa)) is malonyl-CoA:ACP transacylase (MAT) domain. The active-site For malonyltransferase activity is the Ser-790. An N-terminal hotdog fold region spans residues 1124–1255 (HELLGAPVPD…GFVRTEYSQT (132 aa)). Residues 1124–1442 (HELLGAPVPD…VFKTIPNTAS (319 aa)) are dehydratase (DH) domain. Residues 1124 to 1443 (HELLGAPVPD…FKTIPNTASS (320 aa)) form the PKS/mFAS DH domain. The active-site Proton acceptor; for dehydratase activity is His-1156. Positions 1283–1443 (TSMVHADKVY…FKTIPNTASS (161 aa)) are C-terminal hotdog fold. Asp-1351 acts as the Proton donor; for dehydratase activity in catalysis. The tract at residues 1622–1727 (LEVGGGTGGA…RKLLKPGGKL (106 aa)) is methyltransferase (CMet) domain. The segment at 2031–2344 (GTADVCFSED…LGKGEDAVVL (314 aa)) is enoyl reductase (ER) domain. Positions 2372 to 2553 (ASYMVVGGLG…PVAVSLDLPV (182 aa)) are ketoreductase (KR) domain. Residues 2673–2750 (EAQAVVLDAL…ALAAAVAGRS (78 aa)) enclose the Carrier domain. O-(pantetheine 4'-phosphoryl)serine is present on Ser-2710.

Highly reducing polyketide synthase; part of the gene cluster that mediates the biosynthesis of nectriapyrone and its analogs phomopyrone A, acropyrone and zaepyrone. The nectriapyrone biosynthetic gene cluster consists of two genes, the highly reducing polyketide synthase NEC1 that produces a demethylated analog of nectriapyrone from one unit of acetyl-CoA and one unit of malonyl-CoA; and the O-methyltransferase NEC2 that further methylates the NEC1 product to yield nectriapyrone. Nectriapyrone is further hydrolyzed to nectriapyrone D, also known as gulypyrone B, by an unidentified hydrolase localized outside the nectriapyrone cluster. In Pyricularia oryzae (strain 70-15 / ATCC MYA-4617 / FGSC 8958) (Rice blast fungus), this protein is Highly reducing polyketide synthase NEC1.